The chain runs to 614 residues: Aspartate--tRNA ligase (614 aa).

An L-aspartate-binding site is contributed by Glu-174. Positions 198 to 201 (QLFK) are aspartate. Arg-220 contacts L-aspartate. Residues 220 to 222 (RDE) and Gln-229 each bind ATP. L-aspartate is bound at residue His-448. Glu-482 is a binding site for ATP. Arg-489 contributes to the L-aspartate binding site. An ATP-binding site is contributed by 534 to 537 (GLDR). The tract at residues 587–614 (YEDSVKETEQRLEKEAQEDADKNSTWDE) is disordered.

This sequence belongs to the class-II aminoacyl-tRNA synthetase family. Type 1 subfamily. In terms of assembly, homodimer.

The protein resides in the cytoplasm. It carries out the reaction tRNA(Asp) + L-aspartate + ATP = L-aspartyl-tRNA(Asp) + AMP + diphosphate. Its function is as follows. Catalyzes the attachment of L-aspartate to tRNA(Asp) in a two-step reaction: L-aspartate is first activated by ATP to form Asp-AMP and then transferred to the acceptor end of tRNA(Asp). This is Aspartate--tRNA ligase from Lactobacillus johnsonii (strain CNCM I-12250 / La1 / NCC 533).